The primary structure comprises 2446 residues: Transcription factor HIVEP2 (2446 aa).

Residues 1-93 form a disordered region; sequence MDTGDTALGQ…YPPHRPSPYS (93 aa). Residues 17 to 28 show a composition bias toward basic and acidic residues; it reads GETDKASGRWRQ. C2H2-type zinc fingers lie at residues 189–211 and 217–239; these read YICPYCSRACAKPSVLKKHIRSH and YPCIPCGFSFKTKSNLYKHRKSH. Disordered stretches follow at residues 272-303, 340-416, 543-563, and 751-985; these read HSDGEQSTDTDEESSLFAEASDKMSPGPPIPL, ESSQ…PPNT, SNSVPTSSATNLTIPPSLRGS, and SHGH…SFER. 2 stretches are compositionally biased toward polar residues: residues 381–416 and 543–556; these read SEPSLNLLSPHSKGSTDSGYFSRSESAEQQISPPNT and SNSVPTSSATNLTI. Over residues 751–760 the composition is skewed to basic and acidic residues; that stretch reads SHGHTERFDP. The span at 766–777 shows a compositional bias: polar residues; the sequence is QPGSPSLVSEES. Positions 782–791 are enriched in basic and acidic residues; that stretch reads DSDKMSDLGG. Residues 800–812 are compositionally biased toward polar residues; the sequence is SVIQHTNSLSRPN. At serine 819 the chain carries Phosphoserine. A compositionally biased stretch (low complexity) spans 863 to 878; it reads PSPSQQVQQQSYHTQP. The segment covering 892–916 has biased composition (basic and acidic residues); that stretch reads RVTEEPDKPEKEKEAQSKEPEKPVE. The Nuclear localization signal motif lies at 937 to 943; the sequence is PKKKRLR. Serine 950, serine 955, serine 1048, serine 1443, and serine 1447 each carry phosphoserine. The span at 952-982 shows a compositional bias: low complexity; sequence GESSFESTGTGLSRSPSQESNLSHSSSFSMS. Positions 1485-1603 are disordered; the sequence is KDLSRPQKPQ…LEEEGKGHKR (119 aa). 2 stretches are compositionally biased toward low complexity: residues 1510–1533 and 1576–1586; these read SGSSSFSSLSPSSSQDYPSVSPSS and SDMSMSPQSSS. 2 C2H2-type zinc fingers span residues 1799-1821 and 1827-1851; these read YICEECGIRCKKPSMLKKHIRTH and YVCKLCNFAFKTKGNLTKHMKSKAH. Disordered stretches follow at residues 1882–1951 and 2024–2129; these read AAEK…VNVG and EECM…RRDL. Residues 1899–1925 are compositionally biased toward acidic residues; it reads DAEESDGEDGDDNDDDDEDEDDFDDQG. Residues 2029–2053 show a composition bias toward low complexity; it reads PSEPSSSPRDFSPSSHHSSPGYDSS. 10 repeat units span residues 2053-2056, 2059-2062, 2071-2074, 2083-2086, 2089-2092, 2106-2109, 2112-2115, 2118-2121, 2130-2133, and 2145-2148. The interval 2053-2148 is 10 X 4 AA tandem repeats of S-P-[RGMKC]-[RK]; that stretch reads SPCRDNSPKR…TTIRAPSPRR (96 aa). Basic and acidic residues predominate over residues 2078 to 2107; the sequence is PRRDLSPMRHLSPRKEAALRREMSQRDVSP. At serine 2118 the chain carries Phosphoserine. Disordered stretches follow at residues 2242–2325, 2371–2403, and 2423–2446; these read PALS…QEEN, HFSRPEPGQPCTSATHPDLHDGEKDNFGTSQTP, and HSSKELSSSTEESKDPSSEKSQLH. Serine 2297 and serine 2301 each carry phosphoserine. Residues 2307–2317 are compositionally biased toward polar residues; sequence KQSTSEDSLNA. Over residues 2387–2396 the composition is skewed to basic and acidic residues; the sequence is PDLHDGEKDN. 2 positions are modified to phosphoserine: serine 2429 and serine 2431. Residues 2433-2446 are compositionally biased toward basic and acidic residues; that stretch reads EESKDPSSEKSQLH.

Interacts with TCF4. Expressed in brain and skeletal muscle.

The protein resides in the nucleus. This protein specifically binds to the DNA sequence 5'-GGGACTTTCC-3' which is found in the enhancer elements of numerous viral promoters such as those of SV40, CMV, or HIV1. In addition, related sequences are found in the enhancer elements of a number of cellular promoters, including those of the class I MHC, interleukin-2 receptor, somatostatin receptor II, and interferon-beta genes. It may act in T-cell activation. This chain is Transcription factor HIVEP2 (HIVEP2), found in Homo sapiens (Human).